A 322-amino-acid polypeptide reads, in one-letter code: Transaldolase (322 aa).

The active-site Schiff-base intermediate with substrate is the K136.

It belongs to the transaldolase family. Type 1 subfamily. Homodimer.

It is found in the cytoplasm. It catalyses the reaction D-sedoheptulose 7-phosphate + D-glyceraldehyde 3-phosphate = D-erythrose 4-phosphate + beta-D-fructose 6-phosphate. It participates in carbohydrate degradation; pentose phosphate pathway; D-glyceraldehyde 3-phosphate and beta-D-fructose 6-phosphate from D-ribose 5-phosphate and D-xylulose 5-phosphate (non-oxidative stage): step 2/3. Functionally, transaldolase is important for the balance of metabolites in the pentose-phosphate pathway. This Xanthomonas oryzae pv. oryzae (strain MAFF 311018) protein is Transaldolase.